A 130-amino-acid chain; its full sequence is MYSAVTRGIEVTVEPFYLEVQSEPEENRYVWGYRVTIVNNSSETVQLCSRYWQITDANGHVQEVRGSGVVGEQPVLDPGASYQYSSGCPLTTSSGVMVGRYQMKGEDGAQFEIEIPAFSLDVPEQRRTLN.

Residues 3-127 enclose the ApaG domain; it reads SAVTRGIEVT…FSLDVPEQRR (125 aa).

The sequence is that of Protein ApaG from Brucella suis biovar 1 (strain 1330).